We begin with the raw amino-acid sequence, 561 residues long: DNA ligase B (561 aa).

Residue lysine 125 is the N6-AMP-lysine intermediate of the active site.

This sequence belongs to the NAD-dependent DNA ligase family. LigB subfamily.

It carries out the reaction NAD(+) + (deoxyribonucleotide)n-3'-hydroxyl + 5'-phospho-(deoxyribonucleotide)m = (deoxyribonucleotide)n+m + AMP + beta-nicotinamide D-nucleotide.. In terms of biological role, catalyzes the formation of phosphodiester linkages between 5'-phosphoryl and 3'-hydroxyl groups in double-stranded DNA using NAD as a coenzyme and as the energy source for the reaction. This is DNA ligase B from Salmonella paratyphi A (strain AKU_12601).